The primary structure comprises 58 residues: Small ribosomal subunit protein bS21 (58 aa).

Positions 25–58 (SKSGTLQEYRKREHYEKPSVKRKKKSEAARKRKF) are disordered. Residues 32–43 (EYRKREHYEKPS) show a composition bias toward basic and acidic residues. Residues 44 to 58 (VKRKKKSEAARKRKF) are compositionally biased toward basic residues.

It belongs to the bacterial ribosomal protein bS21 family.

The chain is Small ribosomal subunit protein bS21 from Oceanobacillus iheyensis (strain DSM 14371 / CIP 107618 / JCM 11309 / KCTC 3954 / HTE831).